We begin with the raw amino-acid sequence, 239 residues long: Mannose-P-dolichol utilization defect 1 protein homolog 1 (239 aa).

6 consecutive transmembrane segments (helical) span residues 25–45, 62–82, 91–111, 123–143, 174–194, and 202–222; these read CLLP…SMTV, LSVV…AYCL, FGEL…IYYF, AILY…PFLF, LSFL…FTSI, and MLLG…QILL. Residues 27–93 enclose the PQ-loop 1 domain; it reads LPLISKLLGY…KDLPFSAFGE (67 aa). The PQ-loop 2 domain maps to 150–205; sequence KHLIFLSARIPQIWKNFRNKSTGQLSFLTCLMNFGGALARVFTSIQEKAPLSMLLG.

The protein belongs to the MPDU1 (TC 2.A.43.3) family.

It is found in the membrane. The polypeptide is Mannose-P-dolichol utilization defect 1 protein homolog 1 (Arabidopsis thaliana (Mouse-ear cress)).